The following is a 194-amino-acid chain: CASP-like protein 2C1 (194 aa).

Over 1–18 (MSSYMEAAAAARAAEAKT) the chain is Cytoplasmic. Residues 19–39 (EGLLRGACALLAAAAALLVGL) form a helical membrane-spanning segment. Residues 40–59 (NTQTETVLFIRKKATVKDVQ) are Extracellular-facing. Residues 60–80 (ALWVLAMAAAAAAGYHLLQLL) traverse the membrane as a helical segment. The Cytoplasmic segment spans residues 81 to 109 (RCFYLSRFADGKPCRHRRAIAWLCFLLDK). A helical membrane pass occupies residues 110 to 130 (GCAYITFATTVAAAQACVVAL). Over 131–151 (YGTHALQWTKLCNIYTRFCEQ) the chain is Extracellular. A helical membrane pass occupies residues 152 to 172 (VAGSLVCAMLAAVGTALLSVV). Topologically, residues 173–194 (SARNLFRLYPSMLSPPPSSFVG) are cytoplasmic.

Belongs to the Casparian strip membrane proteins (CASP) family. Homodimer and heterodimers.

The protein localises to the cell membrane. The sequence is that of CASP-like protein 2C1 from Oryza sativa subsp. japonica (Rice).